The sequence spans 546 residues: Probable protein kinase UbiB (546 aa).

Residues 124-502 form the Protein kinase domain; that stretch reads DFDIQPLASA…HVRQSQSRYL (379 aa). Residues 130–138 and K153 contribute to the ATP site; that span reads LASASIAQV. Catalysis depends on D288, which acts as the Proton acceptor. The next 2 membrane-spanning stretches (helical) occupy residues 501-521 and 522-542; these read YLLG…VNRP and EWGL…LVGW.

Belongs to the ABC1 family. UbiB subfamily.

The protein localises to the cell inner membrane. Its pathway is cofactor biosynthesis; ubiquinone biosynthesis [regulation]. Its function is as follows. Is probably a protein kinase regulator of UbiI activity which is involved in aerobic coenzyme Q (ubiquinone) biosynthesis. The polypeptide is Probable protein kinase UbiB (Salmonella agona (strain SL483)).